We begin with the raw amino-acid sequence, 206 residues long: MELKLLNDQGQSSSNVAAPDTIFGRDYNEALIHQVVVAYQANARSGNRKQKDREEVHHTTKKPWRQKGTGRARAGMSSSPLWRGGGRIFPNSPDENFSHKVNKKMYRAGLCSILSQLAREGRLSVIESLSVDAPKTKLLSQKLKGMGLDSVLVITDSLDENLLLASRNLPNVLICEPRHADPVSLVFYKKILITKLALAKIEEMLA.

The tract at residues 43 to 78 is disordered; sequence ARSGNRKQKDREEVHHTTKKPWRQKGTGRARAGMSS. Residues 49–58 are compositionally biased toward basic and acidic residues; the sequence is KQKDREEVHH. Basic residues predominate over residues 59-70; that stretch reads TTKKPWRQKGTG.

The protein belongs to the universal ribosomal protein uL4 family. In terms of assembly, part of the 50S ribosomal subunit.

Its function is as follows. One of the primary rRNA binding proteins, this protein initially binds near the 5'-end of the 23S rRNA. It is important during the early stages of 50S assembly. It makes multiple contacts with different domains of the 23S rRNA in the assembled 50S subunit and ribosome. In terms of biological role, forms part of the polypeptide exit tunnel. In Herminiimonas arsenicoxydans, this protein is Large ribosomal subunit protein uL4.